We begin with the raw amino-acid sequence, 159 residues long: ATP synthase subunit b (159 aa).

The chain crosses the membrane as a helical span at residues 8–28; the sequence is ILATIINFIILILILKHFFWD.

This sequence belongs to the ATPase B chain family. As to quaternary structure, F-type ATPases have 2 components, F(1) - the catalytic core - and F(0) - the membrane proton channel. F(1) has five subunits: alpha(3), beta(3), gamma(1), delta(1), epsilon(1). F(0) has three main subunits: a(1), b(2) and c(10-14). The alpha and beta chains form an alternating ring which encloses part of the gamma chain. F(1) is attached to F(0) by a central stalk formed by the gamma and epsilon chains, while a peripheral stalk is formed by the delta and b chains.

The protein localises to the cell membrane. F(1)F(0) ATP synthase produces ATP from ADP in the presence of a proton or sodium gradient. F-type ATPases consist of two structural domains, F(1) containing the extramembraneous catalytic core and F(0) containing the membrane proton channel, linked together by a central stalk and a peripheral stalk. During catalysis, ATP synthesis in the catalytic domain of F(1) is coupled via a rotary mechanism of the central stalk subunits to proton translocation. Functionally, component of the F(0) channel, it forms part of the peripheral stalk, linking F(1) to F(0). The chain is ATP synthase subunit b from Clostridium perfringens (strain ATCC 13124 / DSM 756 / JCM 1290 / NCIMB 6125 / NCTC 8237 / Type A).